The sequence spans 269 residues: Regulatory protein RecX (269 aa).

Belongs to the RecX family.

The protein resides in the cytoplasm. Its function is as follows. Modulates RecA activity. In Lactococcus lactis subsp. cremoris (strain SK11), this protein is Regulatory protein RecX.